The chain runs to 500 residues: Probable malate:quinone oxidoreductase (500 aa).

The protein belongs to the MQO family. It depends on FAD as a cofactor.

It catalyses the reaction (S)-malate + a quinone = a quinol + oxaloacetate. It functions in the pathway carbohydrate metabolism; tricarboxylic acid cycle; oxaloacetate from (S)-malate (quinone route): step 1/1. This Bacillus cereus (strain G9842) protein is Probable malate:quinone oxidoreductase.